We begin with the raw amino-acid sequence, 187 residues long: Resolvase OPG149 (187 aa).

The protein belongs to the RuvC family. Poxviruses-type subfamily. It depends on Mg(2+) as a cofactor.

In terms of biological role, plays a role in DNA replication by cleaving viral DNA concatamers to yield unit-length viral genomes. The concatamer junctions contain inverted repeat sequences that can be extruded as cruciforms, yielding Holliday junctions that A22 protein cleaves. The sequence is that of Resolvase OPG149 (OPG149) from Vaccinia virus (strain Western Reserve) (VACV).